A 374-amino-acid polypeptide reads, in one-letter code: N5-carboxyaminoimidazole ribonucleotide synthase (374 aa).

ATP is bound by residues Arg-108, Lys-148, 153-159 (GYDGKGQ), 183-186 (EKYL), Glu-191, His-214, and 266-267 (NE). Residues 112–296 (KETLKSAGTK…QFDTHILAVT (185 aa)) enclose the ATP-grasp domain.

Belongs to the PurK/PurT family. In terms of assembly, homodimer.

The enzyme catalyses 5-amino-1-(5-phospho-beta-D-ribosyl)imidazole + hydrogencarbonate + ATP = 5-carboxyamino-1-(5-phospho-D-ribosyl)imidazole + ADP + phosphate + 2 H(+). It functions in the pathway purine metabolism; IMP biosynthesis via de novo pathway; 5-amino-1-(5-phospho-D-ribosyl)imidazole-4-carboxylate from 5-amino-1-(5-phospho-D-ribosyl)imidazole (N5-CAIR route): step 1/2. Functionally, catalyzes the ATP-dependent conversion of 5-aminoimidazole ribonucleotide (AIR) and HCO(3)(-) to N5-carboxyaminoimidazole ribonucleotide (N5-CAIR). This chain is N5-carboxyaminoimidazole ribonucleotide synthase, found in Staphylococcus aureus (strain MSSA476).